The primary structure comprises 99 residues: uncharacterized protein (99 aa).

The N-terminal stretch at 1–17 (MMMNAFFPAMALIVLVG) is a signal peptide. Cysteine 18 carries N-palmitoyl cysteine lipidation. Cysteine 18 is lipidated: S-diacylglycerol cysteine.

The protein localises to the cell membrane. This is an uncharacterized protein from Escherichia coli (strain UTI89 / UPEC).